We begin with the raw amino-acid sequence, 218 residues long: Insulin-induced gene 2 protein (218 aa).

Over 1-21 the chain is Cytoplasmic; the sequence is MGDRENVSYGSRPILAQKMNL. The helical transmembrane segment at 22–44 threads the bilayer; sequence LLRGFLLFLIGVFLALVLNLLQV. Residues 45–63 are Lumenal-facing; that stretch reads QRNVTLFPPDVLSSLFSSA. Residues 64 to 81 form a helical membrane-spanning segment; that stretch reads WWVPLCCGTAAAAIGLLY. At 82 to 96 the chain is on the cytoplasmic side; sequence PCIDRHLGEPHKFKR. A helical membrane pass occupies residues 97-119; that stretch reads EWSSVMRCVAVFVGINHASAKVD. Over 120 to 122 the chain is Lumenal; sequence FAN. A helical membrane pass occupies residues 123-141; it reads NMQLSLTLAALSIGLWWTF. The Cytoplasmic segment spans residues 142 to 146; sequence DRSRS. Residues 147 to 168 form a helical membrane-spanning segment; it reads GLGLGIGISFFATLVSQLLVYN. The Lumenal portion of the chain corresponds to 169-182; that stretch reads GVYEYTAPDFLYVR. The helical transmembrane segment at 183–200 threads the bilayer; sequence SWLPCIFFAGGITMGNIG. Over 201 to 218 the chain is Cytoplasmic; it reads RQLEMYERKALVEKSHRD. A KxHxx motif is present at residues 212-218; sequence VEKSHRD.

This sequence belongs to the INSIG family. As to quaternary structure, interacts with scap; interaction is direct and only takes place in the presence of sterols; it prevents interaction between scap and the coat protein complex II (COPII). Associates with the SCAP-SREBP complex; association is mediated via its interaction with scap and only takes place in the presence of sterols.

It is found in the endoplasmic reticulum membrane. Functionally, oxysterol-binding protein that mediates feedback control of cholesterol synthesis by controlling both endoplasmic reticulum to Golgi transport of scap and degradation of hmgcr. Acts as a negative regulator of cholesterol biosynthesis by mediating the retention of the SCAP-SREBP complex in the endoplasmic reticulum, thereby blocking the processing of sterol regulatory element-binding proteins (SREBPs). Binds oxysterol, including 22-hydroxycholesterol, 24-hydroxycholesterol, 25-hydroxycholesterol and 27-hydroxycholesterol, regulating interaction with scap and retention of the SCAP-SREBP complex in the endoplasmic reticulum. In presence of oxysterol, interacts with scap, retaining the SCAP-SREBP complex in the endoplasmic reticulum, thereby preventing scap from escorting SREBPs to the Golgi. Sterol deprivation reduce oxysterol-binding, disrupting the interaction between insig2 and scap, thereby promoting Golgi transport of the SCAP-SREBP complex, followed by processing and nuclear translocation of SREBPs. Also regulates cholesterol synthesis by regulating degradation of hmgcr. The protein is Insulin-induced gene 2 protein of Xenopus laevis (African clawed frog).